The chain runs to 169 residues: MSVLQVLHIPDERLRKVAKPVEEVNAEIQRIVDDMFETMYAEEGIGLAATQVDIHQRIIVIDVSENRDERLVLINPELLEKSGETGIEEGCLSIPEQRALVPRAEKVKIRALDRDGKPFELEADGLLAICIQHEMDHLVGKLFMDYLSPLKQQRIRQKVEKLDRLKARA.

Fe cation-binding residues include cysteine 91 and histidine 133. The active site involves glutamate 134. Histidine 137 serves as a coordination point for Fe cation.

This sequence belongs to the polypeptide deformylase family. Fe(2+) serves as cofactor.

The catalysed reaction is N-terminal N-formyl-L-methionyl-[peptide] + H2O = N-terminal L-methionyl-[peptide] + formate. Its function is as follows. Removes the formyl group from the N-terminal Met of newly synthesized proteins. Requires at least a dipeptide for an efficient rate of reaction. N-terminal L-methionine is a prerequisite for activity but the enzyme has broad specificity at other positions. The protein is Peptide deformylase of Escherichia coli (strain K12 / DH10B).